We begin with the raw amino-acid sequence, 165 residues long: Cyclic pyranopterin monophosphate synthase (165 aa).

Residues 75-77 (MCH) and 115-116 (ME) contribute to the substrate site. D130 is an active-site residue.

Belongs to the MoaC family. In terms of assembly, homohexamer; trimer of dimers.

It carries out the reaction (8S)-3',8-cyclo-7,8-dihydroguanosine 5'-triphosphate = cyclic pyranopterin phosphate + diphosphate. It participates in cofactor biosynthesis; molybdopterin biosynthesis. Functionally, catalyzes the conversion of (8S)-3',8-cyclo-7,8-dihydroguanosine 5'-triphosphate to cyclic pyranopterin monophosphate (cPMP). This is Cyclic pyranopterin monophosphate synthase from Halalkalibacterium halodurans (strain ATCC BAA-125 / DSM 18197 / FERM 7344 / JCM 9153 / C-125) (Bacillus halodurans).